Here is a 512-residue protein sequence, read N- to C-terminus: Histidine ammonia-lyase (512 aa).

The segment at residues 143–145 (CSG) is a cross-link (5-imidazolinone (Cys-Gly)). Residue S144 is modified to 2,3-didehydroalanine (Ser).

Belongs to the PAL/histidase family. In terms of processing, contains an active site 4-methylidene-imidazol-5-one (MIO), which is formed autocatalytically by cyclization and dehydration of residues Cys-Ser-Gly.

It localises to the cytoplasm. It carries out the reaction L-histidine = trans-urocanate + NH4(+). It functions in the pathway amino-acid degradation; L-histidine degradation into L-glutamate; N-formimidoyl-L-glutamate from L-histidine: step 1/3. The sequence is that of Histidine ammonia-lyase from Streptomyces avermitilis (strain ATCC 31267 / DSM 46492 / JCM 5070 / NBRC 14893 / NCIMB 12804 / NRRL 8165 / MA-4680).